Reading from the N-terminus, the 485-residue chain is ATP synthase subunit beta (485 aa).

A compositionally biased stretch (basic and acidic residues) spans 1–11 (MPATETADKNT). The segment at 1–20 (MPATETADKNTKSANSDTSG) is disordered. 170-177 (GGAGVGKT) contacts ATP.

The protein belongs to the ATPase alpha/beta chains family. In terms of assembly, F-type ATPases have 2 components, CF(1) - the catalytic core - and CF(0) - the membrane proton channel. CF(1) has five subunits: alpha(3), beta(3), gamma(1), delta(1), epsilon(1). CF(0) has three main subunits: a(1), b(2) and c(9-12). The alpha and beta chains form an alternating ring which encloses part of the gamma chain. CF(1) is attached to CF(0) by a central stalk formed by the gamma and epsilon chains, while a peripheral stalk is formed by the delta and b chains.

Its subcellular location is the cell membrane. It carries out the reaction ATP + H2O + 4 H(+)(in) = ADP + phosphate + 5 H(+)(out). Functionally, produces ATP from ADP in the presence of a proton gradient across the membrane. The catalytic sites are hosted primarily by the beta subunits. In Mycobacterium avium (strain 104), this protein is ATP synthase subunit beta.